Reading from the N-terminus, the 164-residue chain is E3 ubiquitin ligase complex SCF subunit sconC (164 aa).

The tract at residues 106 to 164 (ILAANYLDIKALLDVGCKTVANMIKGKSPEEIRKTFNIQNDFTPEEEDQIRRENEWAEE) is interaction with the F-box domain of F-box proteins.

This sequence belongs to the SKP1 family. In terms of assembly, component of the SCF (SKP1-CUL1-F-box protein) E3 ubiquitin ligase complexes.

Its pathway is protein modification; protein ubiquitination. Its function is as follows. Essential component of the SCF (SKP1-CUL1-F-box protein) E3 ubiquitin ligase complexes, which mediate the ubiquitination and subsequent proteasomal degradation of target proteins. Controls sulfur metabolite repression, probably by mediating the inactivation or degradation of the metR transcription factor. The chain is E3 ubiquitin ligase complex SCF subunit sconC (sconC) from Arthroderma benhamiae (strain ATCC MYA-4681 / CBS 112371) (Trichophyton mentagrophytes).